A 140-amino-acid chain; its full sequence is uncharacterized protein (140 aa).

This is an uncharacterized protein from Acidianus ambivalens (Desulfurolobus ambivalens).